Here is a 240-residue protein sequence, read N- to C-terminus: Homeobox protein DLX-4 (240 aa).

Residues Gln80–Pro120 are disordered. Basic and acidic residues predominate over residues His88 to Pro110. A DNA-binding region (homeobox) is located at residues Leu117–Leu176.

The protein belongs to the distal-less homeobox family. Expressed in leukemia cells and placenta. Also expressed in kidney and fetal liver.

It is found in the nucleus. May play a role in determining the production of hemoglobin S. May act as a repressor. During embryonic development, plays a role in palatogenesis. This chain is Homeobox protein DLX-4 (DLX4), found in Homo sapiens (Human).